The following is a 206-amino-acid chain: Small ribosomal subunit protein uS4 (206 aa).

Residues 18–45 (NIWGRPKSPVNRREYGPGQHGQRRKGKM) form a disordered region. The S4 RNA-binding domain occupies 94–157 (RRLDAVVYRA…KQLASVLEAV (64 aa)).

Belongs to the universal ribosomal protein uS4 family. Part of the 30S ribosomal subunit. Contacts protein S5. The interaction surface between S4 and S5 is involved in control of translational fidelity.

One of the primary rRNA binding proteins, it binds directly to 16S rRNA where it nucleates assembly of the body of the 30S subunit. Functionally, with S5 and S12 plays an important role in translational accuracy. This is Small ribosomal subunit protein uS4 from Ruegeria pomeroyi (strain ATCC 700808 / DSM 15171 / DSS-3) (Silicibacter pomeroyi).